We begin with the raw amino-acid sequence, 123 residues long: Acidic phospholipase A2 (123 aa).

7 cysteine pairs are disulfide-bonded: Cys-26/Cys-116, Cys-28/Cys-44, Cys-43/Cys-95, Cys-49/Cys-123, Cys-50/Cys-88, Cys-57/Cys-81, and Cys-75/Cys-86. 3 residues coordinate Ca(2+): Tyr-27, Gly-29, and Gly-31. His-47 is a catalytic residue. Asp-48 contributes to the Ca(2+) binding site. Residue Asp-89 is part of the active site.

Belongs to the phospholipase A2 family. Group II subfamily. D49 sub-subfamily. As to quaternary structure, homodimer. Ca(2+) is required as a cofactor. In terms of tissue distribution, expressed by the venom gland.

Its subcellular location is the secreted. It carries out the reaction a 1,2-diacyl-sn-glycero-3-phosphocholine + H2O = a 1-acyl-sn-glycero-3-phosphocholine + a fatty acid + H(+). Its function is as follows. Snake venom phospholipase A2 (PLA2) that inhibits ADP-induced platelet aggregation. PLA2 catalyzes the calcium-dependent hydrolysis of the 2-acyl groups in 3-sn-phosphoglycerides. This is Acidic phospholipase A2 from Deinagkistrodon acutus (Hundred-pace snake).